Consider the following 245-residue polypeptide: MRVGVLGARGKVGATMVAGVEAADDLTFTTGVDAGDSLSALVDSDTEVVIDFTHPSVVMDNLKFLIDNGIHAVVGTTGFTDERLDQVREWLAATPGASVLIAPNFAIGAVLSMHFAQQAAKYFESVEVIELHHPHKADAPSGTAMRTARLIAEARKGMPPNPDATSTGLDGARGADVDGVPVHSVRLAGLVAHQEVLFGTMGETLTIRHDSIDRTSFVPGVLLAVRKIRERPGLTIGIEPLLDLK.

Residues 7-12, 75-77, and 102-105 each bind NAD(+); these read GARGKV, GTT, and APNF. His132 serves as the catalytic Proton donor/acceptor. His133 lines the (S)-2,3,4,5-tetrahydrodipicolinate pocket. Residue Lys136 is the Proton donor of the active site. 142–143 contributes to the (S)-2,3,4,5-tetrahydrodipicolinate binding site; the sequence is GT.

This sequence belongs to the DapB family.

The protein localises to the cytoplasm. It carries out the reaction (S)-2,3,4,5-tetrahydrodipicolinate + NAD(+) + H2O = (2S,4S)-4-hydroxy-2,3,4,5-tetrahydrodipicolinate + NADH + H(+). The enzyme catalyses (S)-2,3,4,5-tetrahydrodipicolinate + NADP(+) + H2O = (2S,4S)-4-hydroxy-2,3,4,5-tetrahydrodipicolinate + NADPH + H(+). It participates in amino-acid biosynthesis; L-lysine biosynthesis via DAP pathway; (S)-tetrahydrodipicolinate from L-aspartate: step 4/4. Functionally, catalyzes the conversion of 4-hydroxy-tetrahydrodipicolinate (HTPA) to tetrahydrodipicolinate. In Mycolicibacterium vanbaalenii (strain DSM 7251 / JCM 13017 / BCRC 16820 / KCTC 9966 / NRRL B-24157 / PYR-1) (Mycobacterium vanbaalenii), this protein is 4-hydroxy-tetrahydrodipicolinate reductase.